The sequence spans 408 residues: Mitochondrial outer membrane protein SLC25A46 (408 aa).

Disordered regions lie at residues 1–23 (MHPR…EEPC) and 52–80 (HWGE…LGAG). Positions 66-76 (LGAAGLNEEPG) are enriched in low complexity. A Solcar 1 repeat occupies 86-177 (QLNRFAGFGI…GIISEFTPLP (92 aa)). Transmembrane regions (helical) follow at residues 93-113 (FGIG…CIVL), 157-177 (FIVQ…TPLP), 189-209 (IGGH…FYSA), 248-268 (LLPL…HYVI), 304-324 (FPEL…LYPL), and 373-393 (LGFY…VAVL). The stretch at 301-403 (DAYFPELIAS…QLTKIIYSTL (103 aa)) is one Solcar 2 repeat.

The protein belongs to the mitochondrial carrier (TC 2.A.29) family.

Its subcellular location is the mitochondrion outer membrane. Its function is as follows. Transmembrane protein of the mitochondrial outer membrane that controls mitochondrial organization. May regulate the assembly of the MICOS (mitochondrial contact site and cristae organizing system) complex which is essential to the biogenesis and dynamics of mitochondrial cristae, the inwards folds of the inner mitochondrial membrane. Through its interaction with the EMC (endoplasmic reticulum membrane protein complex), could regulate mitochondrial lipid homeostasis and thereby mitochondrial fission. This chain is Mitochondrial outer membrane protein SLC25A46, found in Gallus gallus (Chicken).